The following is a 734-amino-acid chain: MAAIELHKPEINADDDDDESPVEQVRLTVSNHDDPSLPVWTFRMWFLGLLSCILLSFLNTFFGYRTQPLMITMISVQVVTLPLGKLMARVLPETKYKIGSWEFSFNPGPFNVKEHVLISMFANAGAGFGSGTAYAVGIVDIIMAFYKRKISFLASWILVITTQILGYGWAGIMRKLVVDPAQMWWPTSVLQVSLFRALHEKDNARMSRGKFFVIAFVCSFAWYIFPAYLFLTLSSISWVCWAFPKSITAQQLGSGMSGLGIGAFALDWSVIASYLGSPLVTPFFAIVNVLVGYVLVMYMVIPISYWGMNVYEANKFPIFSSDLFDKQGQLYNISTIVNNKFELDMENYQQQGRVYLSTFFAISYGIGFAAIVSTLTHVALFNGKGIWQQVRASTKAKMDIHTRLMKKYKDIPGWWFYSLLAISLVLSLVLCIFMKDEIQMPWWGLLLASFMALTFTVPVSIITATTNQTPGLNIITEYLMGVLLPGRPIANVCFKTYGYISMSQAISFLNDFKLGHYMKIPPRSMFLVQFIGTVIAGTVNISVAWYLLTSVENICQKELLPPNSPWTCPSDRVFFDASVIWGLVGPKRIFGRLGNYPALNWFFLGGLIGPVLVWLLQKAFPTKTWISQINLPVLLGATAAMPPATSVNFNCWIIVGVIFNYFVFKYCKKWWQRYNYVLSAALDAGLAFMGVLLYFSLTMNGISINHWWGAKGENCPLASCPTAPGVLVDGCPVF.

14 helical membrane-spanning segments follow: residues 44-64 (MWFL…FFGY), 68-88 (PLMI…KLMA), 125-145 (GAGF…IMAF), 152-172 (FLAS…WAGI), 211-231 (FFVI…YLFL), 252-272 (LGSG…SVIA), 283-303 (FFAI…VIPI), 359-379 (FFAI…THVA), 414-434 (WWFY…CIFM), 442-462 (WWGL…VSII), 525-545 (MFLV…SVAW), 596-616 (YPAL…VWLL), 644-664 (ATSV…YFVF), and 677-697 (VLSA…YFSL).

It belongs to the oligopeptide OPT transporter (TC 2.A.67.1) family. As to expression, expressed in flowers, leaves, roots, and stems.

The protein localises to the membrane. Involved in the translocation of tetra- and pentapeptides across the cellular membrane in an energy-dependent manner. The protein is Oligopeptide transporter 2 (OPT2) of Arabidopsis thaliana (Mouse-ear cress).